Reading from the N-terminus, the 451-residue chain is Protein tweety homolog 1-B (451 aa).

Over 1–43 the chain is Extracellular; it reads MSTSHGYRASWWTYILHQVPHTNFQFEVVDNQFAPQEWSYQQA. Residues 44 to 64 form a helical membrane-spanning segment; it reads LLFLASIAGLCLAISLVLICV. At 65–86 the chain is on the cytoplasmic side; the sequence is YLIKFCCCASQEDDDSKSHRVC. The helical transmembrane segment at 87 to 107 threads the bilayer; the sequence is CVTWSCVAAVIICCAGIGIGF. The Extracellular segment spans residues 108–214; it reads YGNSETNDGV…QVNFIEDYRW (107 aa). N128 carries an N-linked (GlcNAc...) asparagine glycan. Residues 215–235 traverse the membrane as a helical segment; the sequence is LAYILLLLLDLIICLFTLLSL. The Cytoplasmic segment spans residues 236–240; it reads AKQIK. Residues 241 to 261 form a helical membrane-spanning segment; it reads WLVIVMTVVSFFVLLLSWGSM. Topologically, residues 262–390 are extracellular; it reads GLEMATAVGL…LKGLCYDGME (129 aa). 2 disulfide bridges follow: C275-C385 and C303-C370. Residues N284 and N355 are each glycosylated (N-linked (GlcNAc...) asparagine). Residues 391–411 form a helical membrane-spanning segment; sequence GILFLLLFSFLSALSFTAAVC. Topologically, residues 412-451 are cytoplasmic; that stretch reads SLPRAWKRFRNRDLDYDDMDEDDPFNPQESKRFVQWQSSI.

It belongs to the tweety family. As to quaternary structure, homotetramer; disulfide-linked. Homodimer.

It is found in the cell membrane. It catalyses the reaction chloride(in) = chloride(out). The enzyme catalyses L-glutamate(out) = L-glutamate(in). Functionally, may act as a calcium-independent, swelling-dependent volume-regulated anion channel (VRAC-swell) which plays a pivotal role in the process of regulatory volume decrease (RVD) in the brain through the efflux of anions like chloride and organic osmolytes like glutamate. In Xenopus laevis (African clawed frog), this protein is Protein tweety homolog 1-B (ttyh1-b).